The sequence spans 497 residues: Galactose/methyl galactoside import ATP-binding protein MglA (497 aa).

ABC transporter domains lie at 6–241 (LEIK…VGRS) and 252–497 (VPGE…AKYL). 38–45 (GENGAGKS) lines the ATP pocket.

The protein belongs to the ABC transporter superfamily. Galactose/methyl galactoside importer (TC 3.A.1.2.3) family. In terms of assembly, the complex is composed of one ATP-binding protein (MglA), two transmembrane proteins (MglC) and a solute-binding protein (MglB).

Its subcellular location is the cell inner membrane. It catalyses the reaction D-galactose(out) + ATP + H2O = D-galactose(in) + ADP + phosphate + H(+). The catalysed reaction is methyl beta-D-galactoside(out) + ATP + H2O = methyl beta-D-galactoside(in) + ADP + phosphate + H(+). Functionally, part of the ABC transporter complex MglABC involved in galactose/methyl galactoside import. Responsible for energy coupling to the transport system. This is Galactose/methyl galactoside import ATP-binding protein MglA from Treponema denticola (strain ATCC 35405 / DSM 14222 / CIP 103919 / JCM 8153 / KCTC 15104).